Reading from the N-terminus, the 159-residue chain is Succinate dehydrogenase [ubiquinone] cytochrome b small subunit, mitochondrial (159 aa).

A mitochondrion-targeting transit peptide spans 1–30 (MLQTRLGLGALRQGRLLFAVKSFSTTSVAK). The Mitochondrial matrix segment spans residues 31 to 65 (IFPPPPQTIKGTVNDAAVFPHHSKLHGSYHWDFER). A helical membrane pass occupies residues 66–82 (IIAIAMVPQVMIPLFTG). At 83 to 89 (TSHPLMD) the chain is on the mitochondrial intermembrane side. The helical transmembrane segment at 90-109 (AALACTLITHAHLGFESCVI) threads the bilayer. A heme-binding site is contributed by histidine 99. Topologically, residues 110 to 122 (DYFPARRFKKLSP) are mitochondrial matrix. Tyrosine 111 serves as a coordination point for a ubiquinone. The helical transmembrane segment at 123-140 (LMHWILRGCTVLTLIGVY) threads the bilayer. Residues 141–159 (EFNTNDIGLTEGIKKLWKS) lie on the Mitochondrial intermembrane side of the membrane.

The protein belongs to the CybS family. In terms of assembly, forms part of complex II containing four subunits: a flavoprotein (FP), an iron-sulfur protein (IP) and a cytochrome b composed of a large and a small subunit.

The protein resides in the mitochondrion inner membrane. It functions in the pathway carbohydrate metabolism; tricarboxylic acid cycle. Membrane-anchoring subunit of succinate dehydrogenase (SDH) that is involved in complex II of the mitochondrial electron transport chain and is responsible for transferring electrons from succinate to ubiquinone (coenzyme Q). In Schizosaccharomyces pombe (strain 972 / ATCC 24843) (Fission yeast), this protein is Succinate dehydrogenase [ubiquinone] cytochrome b small subunit, mitochondrial (sdh4).